A 203-amino-acid polypeptide reads, in one-letter code: Outer-membrane lipoprotein LolB (203 aa).

Positions 1-17 (MNRLFRLLPLASLVLTA) are cleaved as a signal peptide. A lipid anchor (N-palmitoyl cysteine) is attached at Cys-18. Cys-18 carries S-diacylglycerol cysteine lipidation.

Belongs to the LolB family. As to quaternary structure, monomer.

The protein resides in the cell outer membrane. Functionally, plays a critical role in the incorporation of lipoproteins in the outer membrane after they are released by the LolA protein. This Klebsiella pneumoniae (strain 342) protein is Outer-membrane lipoprotein LolB.